The sequence spans 167 residues: Large ribosomal subunit protein uL10 (167 aa).

Belongs to the universal ribosomal protein uL10 family. Part of the ribosomal stalk of the 50S ribosomal subunit. The N-terminus interacts with L11 and the large rRNA to form the base of the stalk. The C-terminus forms an elongated spine to which L12 dimers bind in a sequential fashion forming a multimeric L10(L12)X complex.

Functionally, forms part of the ribosomal stalk, playing a central role in the interaction of the ribosome with GTP-bound translation factors. In Alkaliphilus oremlandii (strain OhILAs) (Clostridium oremlandii (strain OhILAs)), this protein is Large ribosomal subunit protein uL10.